Reading from the N-terminus, the 319-residue chain is Large ribosomal subunit protein uL10 (319 aa).

The tract at residues 286–319 (AGDSGASAAPKEEEKAAEPEEESDEEMGFSLFDD) is disordered. Positions 304–319 (PEEESDEEMGFSLFDD) are enriched in acidic residues.

This sequence belongs to the universal ribosomal protein uL10 family. P0 forms a pentameric complex by interaction with dimers of P1 and P2. Phosphorylated.

In terms of biological role, ribosomal protein P0 is the functional equivalent of E.coli protein L10. This is Large ribosomal subunit protein uL10 (RP-P0) from Zea mays (Maize).